A 62-amino-acid chain; its full sequence is Photosystem II reaction center protein Z (62 aa).

The next 2 helical transmembrane spans lie at threonine 8–alanine 28 and phenylalanine 41–valine 61.

It belongs to the PsbZ family. As to quaternary structure, PSII is composed of 1 copy each of membrane proteins PsbA, PsbB, PsbC, PsbD, PsbE, PsbF, PsbH, PsbI, PsbJ, PsbK, PsbL, PsbM, PsbT, PsbY, PsbZ, Psb30/Ycf12, at least 3 peripheral proteins of the oxygen-evolving complex and a large number of cofactors. It forms dimeric complexes.

Its subcellular location is the plastid. The protein localises to the chloroplast thylakoid membrane. In terms of biological role, may control the interaction of photosystem II (PSII) cores with the light-harvesting antenna, regulates electron flow through the 2 photosystem reaction centers. PSII is a light-driven water plastoquinone oxidoreductase, using light energy to abstract electrons from H(2)O, generating a proton gradient subsequently used for ATP formation. This is Photosystem II reaction center protein Z from Oltmannsiellopsis viridis (Marine flagellate).